The primary structure comprises 677 residues: Transmembrane and coiled-coil domain-containing protein 3 (677 aa).

The signal sequence occupies residues Met1 to Ala22. Residues Asp124–Asp204 are a coiled coil. N-linked (GlcNAc...) asparagine glycans are attached at residues Asn206 and Asn230. The next 10 membrane-spanning stretches (helical) occupy residues Trp286–Leu306, Ile317–Leu337, Ile350–Gly370, Val416–Pro436, Ile456–Val476, Glu498–Leu518, Phe554–Tyr574, Val578–Leu598, Tyr608–Gly628, and Glu640–Trp660.

The protein belongs to the monovalent cation:proton antiporter 2 (CPA2) transporter (TC 2.A.37) family. Expressed in the cornea, lens capsule and choroid-retinal pigment epithelium (at protein level).

Its subcellular location is the membrane. Functionally, probable Na(+)/H(+) antiporter. This Homo sapiens (Human) protein is Transmembrane and coiled-coil domain-containing protein 3 (TMCO3).